A 221-amino-acid polypeptide reads, in one-letter code: Uracil-DNA glycosylase (221 aa).

The Proton acceptor role is filled by D63.

Belongs to the uracil-DNA glycosylase (UDG) superfamily. UNG family.

The protein resides in the cytoplasm. It catalyses the reaction Hydrolyzes single-stranded DNA or mismatched double-stranded DNA and polynucleotides, releasing free uracil.. Functionally, excises uracil residues from the DNA which can arise as a result of misincorporation of dUMP residues by DNA polymerase or due to deamination of cytosine. This Blochmanniella floridana protein is Uracil-DNA glycosylase.